Here is a 309-residue protein sequence, read N- to C-terminus: Testis-expressed protein 264 homolog (309 aa).

Over 1-3 the chain is Lumenal; that stretch reads MPD. The helical; Signal-anchor for type III membrane protein transmembrane segment at 4–24 threads the bilayer; that stretch reads LLLLGLIGALTLLLLLTLLAF. Residues 25–309 are Cytoplasmic-facing; that stretch reads AGYSGLLTGV…ELSTPERGEE (285 aa). The segment at 193 to 309 is disordered; it reads PEVKETERKC…ELSTPERGEE (117 aa). A compositionally biased stretch (low complexity) spans 208–225; that stretch reads ATDTQTDGTGADTSDASS. 2 positions are modified to phosphoserine: S238 and S243. Over residues 250 to 262 the composition is skewed to basic and acidic residues; that stretch reads GWDDGDNRSEHSY. Low complexity predominate over residues 263–272; that stretch reads SESGASGSSF. The LIR motif signature appears at 272-275; sequence FEEL.

As to quaternary structure, interacts (via the LIR motif) with ATG8 family proteins MAP1LC3A, MAP1LC3B, GABARAP and GABARAPL1. Interacts with VCP/p97; bridging VCP/p97 to covalent DNA-protein cross-links (DPCs). Interacts with TOP1 (when sumoylated).

Its subcellular location is the endoplasmic reticulum membrane. The protein localises to the cytoplasmic vesicle. It is found in the autophagosome. It localises to the cytoplasm. The protein resides in the cytosol. Its subcellular location is the nucleus. The protein localises to the chromosome. Major reticulophagy (also called ER-phagy) receptor that acts independently of other candidate reticulophagy receptors to remodel subdomains of the endoplasmic reticulum into autophagosomes upon nutrient stress, which then fuse with lysosomes for endoplasmic reticulum turnover. The ATG8-containing isolation membrane (IM) cradles a tubular segment of TEX264-positive ER near a three-way junction, allowing the formation of a synapse of 2 juxtaposed membranes with trans interaction between the TEX264 and ATG8 proteins. Expansion of the IM would extend the capture of ER, possibly through a 'zipper-like' process involving continued trans TEX264-ATG8 interactions, until poorly understood mechanisms lead to the fission of relevant membranes and, ultimately, autophagosomal membrane closure. Also involved in the repair of covalent DNA-protein cross-links (DPCs) during DNA synthesis: acts by bridging VCP/p97 to covalent DNA-protein cross-links (DPCs) and initiating resolution of DPCs by SPRTN. This is Testis-expressed protein 264 homolog from Mus musculus (Mouse).